The primary structure comprises 215 residues: Cytochrome b6 (215 aa).

Residues 32 to 52 (IFYCLGGITLTCFLVQVASGF) form a helical membrane-spanning segment. Cysteine 35 contacts heme c. Heme b contacts are provided by histidine 86 and histidine 100. 3 helical membrane passes run 90–110 (ASMM…TGGF), 116–136 (LTWV…VTGY), and 186–206 (LHTF…FLMI). The heme b site is built by histidine 187 and histidine 202.

This sequence belongs to the cytochrome b family. PetB subfamily. As to quaternary structure, the 4 large subunits of the cytochrome b6-f complex are cytochrome b6, subunit IV (17 kDa polypeptide, PetD), cytochrome f and the Rieske protein, while the 4 small subunits are PetG, PetL, PetM and PetN. The complex functions as a dimer. Heme b serves as cofactor. Requires heme c as cofactor.

Its subcellular location is the plastid. The protein resides in the chloroplast thylakoid membrane. Its function is as follows. Component of the cytochrome b6-f complex, which mediates electron transfer between photosystem II (PSII) and photosystem I (PSI), cyclic electron flow around PSI, and state transitions. The polypeptide is Cytochrome b6 (Anthoceros angustus (Hornwort)).